Reading from the N-terminus, the 388-residue chain is Homoserine O-acetyltransferase (388 aa).

In terms of domain architecture, AB hydrolase-1 spans 55 to 354 (PIVLIEHALT…PTGHDGFLIE (300 aa)). Catalysis depends on S150, which acts as the Nucleophile. R220 is a binding site for substrate. Residues D318 and H348 contribute to the active site. D349 lines the substrate pocket.

This sequence belongs to the AB hydrolase superfamily. MetX family. Homodimer.

The protein resides in the cytoplasm. The enzyme catalyses L-homoserine + acetyl-CoA = O-acetyl-L-homoserine + CoA. Its pathway is amino-acid biosynthesis; L-methionine biosynthesis via de novo pathway; O-acetyl-L-homoserine from L-homoserine: step 1/1. Transfers an acetyl group from acetyl-CoA to L-homoserine, forming acetyl-L-homoserine. The polypeptide is Homoserine O-acetyltransferase (Corynebacterium urealyticum (strain ATCC 43042 / DSM 7109)).